Reading from the N-terminus, the 198-residue chain is Ribonuclease HII (198 aa).

The RNase H type-2 domain maps to 14–198 (HMIVGVDEAG…FAPVAQLQLV (185 aa)). Residues D20, E21, and D110 each coordinate a divalent metal cation.

It belongs to the RNase HII family. The cofactor is Mn(2+). Mg(2+) serves as cofactor.

It localises to the cytoplasm. The catalysed reaction is Endonucleolytic cleavage to 5'-phosphomonoester.. Endonuclease that specifically degrades the RNA of RNA-DNA hybrids. This is Ribonuclease HII from Sphingopyxis alaskensis (strain DSM 13593 / LMG 18877 / RB2256) (Sphingomonas alaskensis).